The following is a 793-amino-acid chain: DnaJ homolog subfamily C member 10 (793 aa).

The signal sequence occupies residues 1–32 (MGVWLNKDDYIRDLKRIILCFLIVYMAILVGT). Positions 35–100 (DFYSLLGVSK…DLRKKYDKYG (66 aa)) constitute a J domain. One can recognise a Thioredoxin 1 domain in the interval 130–232 (EIITLERREF…ESLVSFAMQH (103 aa)). C158 and C161 are disulfide-bonded. Trxb regions lie at residues 235 to 350 (STVT…LPDF) and 348 to 463 (PDFE…PQNF). Thioredoxin domains are found at residues 454–553 (HVTT…IEDL), 557–662 (SVVS…SLRI), and 671–778 (VSTD…ISEK). A disulfide bond links C480 and C483. An N-linked (GlcNAc...) asparagine glycan is attached at N530. 2 cysteine pairs are disulfide-bonded: C588–C591 and C700–C703. The short motif at 790-793 (KDEL) is the Prevents secretion from ER element.

In terms of assembly, interacts with EDEM1. Interacts with HSPA5 (via its J domain).

The protein localises to the endoplasmic reticulum lumen. In terms of biological role, endoplasmic reticulum disulfide reductase involved both in the correct folding of proteins and degradation of misfolded proteins. Required for efficient folding of proteins in the endoplasmic reticulum by catalyzing the removal of non-native disulfide bonds formed during the folding of proteins, such as LDLR. Also involved in endoplasmic reticulum-associated degradation (ERAD) by reducing incorrect disulfide bonds in misfolded glycoproteins recognized by EDEM1. Interaction with HSPA5 is required its activity, not for the disulfide reductase activity, but to facilitate the release of DNAJC10 from its substrate. Promotes apoptotic signaling pathway in response to endoplasmic reticulum stress. The sequence is that of DnaJ homolog subfamily C member 10 (DNAJC10) from Homo sapiens (Human).